The sequence spans 488 residues: N-succinylglutamate 5-semialdehyde dehydrogenase (488 aa).

NAD(+) is bound at residue 221-226 (GSSRTG). Catalysis depends on residues E244 and C278.

This sequence belongs to the aldehyde dehydrogenase family. AstD subfamily.

The catalysed reaction is N-succinyl-L-glutamate 5-semialdehyde + NAD(+) + H2O = N-succinyl-L-glutamate + NADH + 2 H(+). It participates in amino-acid degradation; L-arginine degradation via AST pathway; L-glutamate and succinate from L-arginine: step 4/5. In terms of biological role, catalyzes the NAD-dependent reduction of succinylglutamate semialdehyde into succinylglutamate. This chain is N-succinylglutamate 5-semialdehyde dehydrogenase, found in Pseudomonas fluorescens (strain SBW25).